The following is a 297-amino-acid chain: Chelated iron transport system membrane protein YfeD (297 aa).

The next 8 helical transmembrane spans lie at 20–40 (AIVA…YLVL), 58–78 (IVLA…SGIF), 96–116 (TVMG…FSRI), 133–153 (ISLT…LVVL), 172–192 (IGLP…LTIV), 197–217 (AVGV…AFMI), 224–244 (MLVV…LISF), and 248–268 (GATG…ALIY).

Belongs to the ABC-3 integral membrane protein family.

It localises to the cell inner membrane. In terms of biological role, part of an ATP-driven transport system YfeABCD for chelated iron. This Yersinia pestis protein is Chelated iron transport system membrane protein YfeD (yfeD).